Here is a 129-residue protein sequence, read N- to C-terminus: MKNDTLNDVINSIKNASRLGKREIIAEPAAKLIGKVLKVMQDYNYIKSFEVIDESRGGKFKIVLNTTINNCGVIKPRFPVKNENLEKYEARYLPAEDFGILILTTTKGVMSNIEARKLGIGGKLLAYVY.

This sequence belongs to the universal ribosomal protein uS8 family. Part of the 30S ribosomal subunit.

In terms of biological role, one of the primary rRNA binding proteins, it binds directly to 16S rRNA central domain where it helps coordinate assembly of the platform of the 30S subunit. This chain is Small ribosomal subunit protein uS8, found in Thermoplasma acidophilum (strain ATCC 25905 / DSM 1728 / JCM 9062 / NBRC 15155 / AMRC-C165).